Reading from the N-terminus, the 189-residue chain is Interleukin-23 subunit alpha (189 aa).

The signal sequence occupies residues 1–19 (MLGSRAVMLLLLLPWTAQG). A disulfide bridge links C77 with C89.

It belongs to the IL-6 superfamily. Heterodimer with IL12B; disulfide-linked. The heterodimer is known as interleukin IL-23. Interacts with IL23R; this interaction enables recruitment of IL12RB1. As to expression, secreted by activated dendritic and phagocytic cells and keratinocytes. Also expressed by dermal Langerhans cells (at protein level).

Its subcellular location is the secreted. In terms of biological role, associates with IL12B to form the pro-inflammatory cytokine IL-23 that plays different roles in innate and adaptive immunity. Released by antigen-presenting cells such as dendritic cells or macrophages, binds to a heterodimeric receptor complex composed of IL12RB1 and IL23R to activate JAK2 and TYK2 which then phosphorylate the receptor to form a docking site leading to the phosphorylation of STAT3 and STAT4. This process leads to activation of several pathways including p38 MAPK or NF-kappa-B and promotes the production of pro-inflammatory cytokines such as interleukin-17A/IL17A. In turn, participates in the early and effective intracellular bacterial clearance. Promotes the expansion and survival of T-helper 17 cells, a CD4-positive helper T-cell subset that produces IL-17, as well as other IL-17-producing cells. The chain is Interleukin-23 subunit alpha (IL23A) from Homo sapiens (Human).